Consider the following 228-residue polypeptide: Small ribosomal subunit protein uS3 (228 aa).

Residues 39–107 (VRAYLQDKLK…PVHINIEEIR (69 aa)) form the KH type-2 domain.

It belongs to the universal ribosomal protein uS3 family. As to quaternary structure, part of the 30S ribosomal subunit. Forms a tight complex with proteins S10 and S14.

Its function is as follows. Binds the lower part of the 30S subunit head. Binds mRNA in the 70S ribosome, positioning it for translation. The sequence is that of Small ribosomal subunit protein uS3 from Ectopseudomonas mendocina (strain ymp) (Pseudomonas mendocina).